Consider the following 503-residue polypeptide: Glutamate--tRNA ligase (503 aa).

Positions 12-22 (PSPTGYLHVGG) match the 'HIGH' region motif. Positions 259-263 (KLSKR) match the 'KMSKS' region motif. K262 is an ATP binding site.

Belongs to the class-I aminoacyl-tRNA synthetase family. Glutamate--tRNA ligase type 1 subfamily. As to quaternary structure, monomer.

The protein resides in the cytoplasm. It catalyses the reaction tRNA(Glu) + L-glutamate + ATP = L-glutamyl-tRNA(Glu) + AMP + diphosphate. In terms of biological role, catalyzes the attachment of glutamate to tRNA(Glu) in a two-step reaction: glutamate is first activated by ATP to form Glu-AMP and then transferred to the acceptor end of tRNA(Glu). This chain is Glutamate--tRNA ligase, found in Chlorobaculum parvum (strain DSM 263 / NCIMB 8327) (Chlorobium vibrioforme subsp. thiosulfatophilum).